The sequence spans 351 residues: Soluble interferon alpha/beta receptor OPG204 (351 aa).

The N-terminal stretch at 1–19 (MTMKMMVHIYFVSLLLLLF) is a signal peptide. Ig-like C2-type domains follow at residues 65 to 147 (LGEP…RSHI) and 155 to 237 (PKTY…IVVS). Intrachain disulfides connect C73/C129 and C172/C221. N-linked (GlcNAc...) asparagine; by host glycosylation is found at N117, N182, N261, N269, and N321. The region spanning 246–345 (PSQDHRFKLI…HNYYFEKTLT (100 aa)) is the Ig-like V-type domain. Cysteines 272 and 333 form a disulfide.

This sequence belongs to the interleukin-1 receptor family. Interacts with host IFNA1.

The protein resides in the secreted. In terms of biological role, counteracts the antiviral effects of host IFN-alpha/beta and key IFN-inducible proteins involved in viral RNA degradation suxh as host OAS1. Acts as a soluble IFN-alpha receptor and thus inhibits the interaction between host IFN-alpha and its receptor. The protein is Soluble interferon alpha/beta receptor OPG204 (OPG204) of Vaccinia virus (strain Western Reserve) (VACV).